The following is a 139-amino-acid chain: D-ribose pyranase (139 aa).

The Proton donor role is filled by His20. Substrate-binding positions include Asp28, His106, and 128-130; that span reads YAN.

It belongs to the RbsD / FucU family. RbsD subfamily. As to quaternary structure, homodecamer.

The protein localises to the cytoplasm. It carries out the reaction beta-D-ribopyranose = beta-D-ribofuranose. It functions in the pathway carbohydrate metabolism; D-ribose degradation; D-ribose 5-phosphate from beta-D-ribopyranose: step 1/2. In terms of biological role, catalyzes the interconversion of beta-pyran and beta-furan forms of D-ribose. The chain is D-ribose pyranase from Shewanella halifaxensis (strain HAW-EB4).